A 290-amino-acid chain; its full sequence is N-acetylmannosamine kinase (290 aa).

Residues 6 to 13 (ALDIGGTK) and 132 to 139 (GVGGGIIL) contribute to the ATP site. Zn(2+) contacts are provided by His156, Cys166, Cys168, and Cys173.

Belongs to the ROK (NagC/XylR) family. NanK subfamily. Homodimer.

The enzyme catalyses an N-acyl-D-mannosamine + ATP = an N-acyl-D-mannosamine 6-phosphate + ADP + H(+). It functions in the pathway amino-sugar metabolism; N-acetylneuraminate degradation; D-fructose 6-phosphate from N-acetylneuraminate: step 2/5. Functionally, catalyzes the phosphorylation of N-acetylmannosamine (ManNAc) to ManNAc-6-P. The polypeptide is N-acetylmannosamine kinase (Yersinia pseudotuberculosis serotype O:1b (strain IP 31758)).